We begin with the raw amino-acid sequence, 386 residues long: Enoyl-[acyl-carrier-protein] reductase 2, mitochondrial (386 aa).

Residues 1-22 (MYSVLKQSIRPRLLATHNQFRT) constitute a mitochondrion transit peptide. Y79 functions as the Proton donor in the catalytic mechanism. NADP(+)-binding positions include N172, 199-202 (TSAV), 222-224 (RDR), 296-299 (YGGM), 321-323 (FWV), and K381.

It belongs to the zinc-containing alcohol dehydrogenase family. Quinone oxidoreductase subfamily. As to quaternary structure, homodimer and heterodimer with ETR1.

It localises to the mitochondrion. The enzyme catalyses a 2,3-saturated acyl-[ACP] + NADP(+) = a (2E)-enoyl-[ACP] + NADPH + H(+). Its function is as follows. Required for respiration and the maintenance of the mitochondrial compartment. Oxidoreductase with a preference for short and medium chain substrates, including trans-2-hexenoyl-CoA (C6), trans-2-decenoyl-CoA (C10), and trans-2-hexadecenoyl-CoA (C16). May play a role in mitochondrial fatty acid synthesis. The protein is Enoyl-[acyl-carrier-protein] reductase 2, mitochondrial (ETR2) of Candida tropicalis (Yeast).